Reading from the N-terminus, the 113-residue chain is U11-theraphotoxin-Hhn1e (113 aa).

The first 21 residues, 1-21, serve as a signal peptide directing secretion; it reads MNTVRVTFLLVFVLAVSLGQA. The propeptide occupies 22 to 74; sequence DKDENRMEMLEKTEQGKSYLDFAENLLLQKLEELEARLLEEDSEESRNSRQKR. Over residues 60–69 the composition is skewed to basic and acidic residues; it reads LEEDSEESRN. The disordered stretch occupies residues 60–87; it reads LEEDSEESRNSRQKRCIGEGVPRDENDP. Cystine bridges form between Cys75/Cys90 and Cys89/Cys110.

It belongs to the neurotoxin 14 (magi-1) family. 01 (HNTX-16) subfamily. In terms of tissue distribution, expressed by the venom gland.

The protein resides in the secreted. In terms of biological role, probable ion channel inhibitor. This Cyriopagopus hainanus (Chinese bird spider) protein is U11-theraphotoxin-Hhn1e.